The following is a 425-amino-acid chain: Perilipin-2 (425 aa).

Position 2 is an N-acetylalanine (Ala2). Ser213 carries the phosphoserine modification. At Tyr230 the chain carries Phosphotyrosine.

This sequence belongs to the perilipin family. As to quaternary structure, interacts with IRGC. In terms of processing, acylated; primarily with C14, C16 and C18 fatty acids. Post-translationally, phosphorylation at Tyr-230 by isoform 1 of CHKA (CHKalpha2) promotes dissociation from lipid droplets: dissociation is followed by recruitment of autophagosome machinery to lipid droplets and subsequent lipid droplet lipolysis. Polyubiquitination of Nt-acetylatable A-PLIN2 by MARCHF6 lead to degradation by 26S proteasomes. Adipose tissue specific. Expressed abundantly and preferentially in fat pads.

Its subcellular location is the membrane. The protein resides in the lipid droplet. Structural component of lipid droplets, which is required for the formation and maintenance of lipid storage droplets. This is Perilipin-2 from Mus musculus (Mouse).